The following is an 836-amino-acid chain: Eukaryotic translation initiation factor 3 subunit C (836 aa).

Residues 1-97 (MSRFFVSGYD…RRVVKSAKEK (97 aa)) are disordered. Over residues 13–55 (SSSEEEDLLTSSEEELMSSEQESDSEFDDEFANDDDSDSSDSD) the composition is skewed to acidic residues. The segment covering 86-97 (EGRRVVKSAKEK) has biased composition (basic and acidic residues). Residues 586–761 (FHMHINLELL…KSINFVSSEH (176 aa)) form the PCI domain. The interval 783–817 (DKNEKTASNGHGRKTTQQQQQQQQKEQREQTHDEN) is disordered. Low complexity predominate over residues 797 to 806 (TTQQQQQQQQ). The segment covering 807–817 (KEQREQTHDEN) has biased composition (basic and acidic residues).

Belongs to the eIF-3 subunit C family. As to quaternary structure, component of the eukaryotic translation initiation factor 3 (eIF-3) complex.

The protein localises to the cytoplasm. In terms of biological role, component of the eukaryotic translation initiation factor 3 (eIF-3) complex, which is involved in protein synthesis of a specialized repertoire of mRNAs and, together with other initiation factors, stimulates binding of mRNA and methionyl-tRNAi to the 40S ribosome. The eIF-3 complex specifically targets and initiates translation of a subset of mRNAs involved in cell proliferation. The sequence is that of Eukaryotic translation initiation factor 3 subunit C from Meyerozyma guilliermondii (strain ATCC 6260 / CBS 566 / DSM 6381 / JCM 1539 / NBRC 10279 / NRRL Y-324) (Yeast).